The primary structure comprises 223 residues: DnaJ homolog subfamily B member 9 (223 aa).

An N-terminal signal peptide occupies residues 1–23; that stretch reads MATPQSIFIFAICILMITELILA. The 65-residue stretch at 26–90 folds into the J domain; sequence SYYDILGVPK…NRRKEYDTLG (65 aa). A divergent targeting domain region spans residues 91–223; the sequence is HSAFTSGKGQ…VTTYTDCSGQ (133 aa). A Phosphoserine modification is found at Ser-133.

As to quaternary structure, interacts with HSPA5/BiP; interaction is direct. Interacts with ERN1/IRE1 (via the luminal region). Interacts with DERL1. Widely expressed. Expressed at highest level in the liver, placenta and kidney.

It is found in the endoplasmic reticulum lumen. Its function is as follows. Co-chaperone for Hsp70 protein HSPA5/BiP that acts as a key repressor of the ERN1/IRE1-mediated unfolded protein response (UPR). J domain-containing co-chaperones stimulate the ATPase activity of Hsp70 proteins and are required for efficient substrate recognition by Hsp70 proteins. In the unstressed endoplasmic reticulum, interacts with the luminal region of ERN1/IRE1 and selectively recruits HSPA5/BiP: HSPA5/BiP disrupts the dimerization of the active ERN1/IRE1 luminal region, thereby inactivating ERN1/IRE1. Also involved in endoplasmic reticulum-associated degradation (ERAD) of misfolded proteins. Required for survival of B-cell progenitors and normal antibody production. The sequence is that of DnaJ homolog subfamily B member 9 (DNAJB9) from Homo sapiens (Human).